The primary structure comprises 528 residues: Phosphoenolpyruvate carboxykinase (ATP) (528 aa).

Residues Arg56, Tyr192, and Lys198 each coordinate substrate. Residues Lys198, His217, and 233 to 241 contribute to the ATP site; that span reads GLSGTGKTT. 2 residues coordinate Mn(2+): Lys198 and His217. Asp254 is a Mn(2+) binding site. ATP-binding residues include Glu282, Arg319, and Thr444. Residue Arg319 participates in substrate binding.

Belongs to the phosphoenolpyruvate carboxykinase (ATP) family. The cofactor is Mn(2+).

It localises to the cytoplasm. It carries out the reaction oxaloacetate + ATP = phosphoenolpyruvate + ADP + CO2. Its pathway is carbohydrate biosynthesis; gluconeogenesis. Functionally, involved in the gluconeogenesis. Catalyzes the conversion of oxaloacetate (OAA) to phosphoenolpyruvate (PEP) through direct phosphoryl transfer between the nucleoside triphosphate and OAA. In Bacillus cytotoxicus (strain DSM 22905 / CIP 110041 / 391-98 / NVH 391-98), this protein is Phosphoenolpyruvate carboxykinase (ATP).